The primary structure comprises 495 residues: GTPase Der (495 aa).

EngA-type G domains are found at residues Pro-3–Glu-166 and Ile-208–Thr-381. Residues Gly-9–Ser-16, Asp-56–Ile-60, Asn-118–Asp-121, Gly-214–Ser-221, Asp-261–Val-265, and Asn-326–Asp-329 contribute to the GTP site. Residues Lys-382–Glu-466 enclose the KH-like domain.

The protein belongs to the TRAFAC class TrmE-Era-EngA-EngB-Septin-like GTPase superfamily. EngA (Der) GTPase family. As to quaternary structure, associates with the 50S ribosomal subunit.

Functionally, GTPase that plays an essential role in the late steps of ribosome biogenesis. The chain is GTPase Der from Yersinia pseudotuberculosis serotype IB (strain PB1/+).